The chain runs to 796 residues: uncharacterized protein (796 aa).

It localises to the mitochondrion. This is an uncharacterized protein from Dictyostelium discoideum (Social amoeba).